The following is a 251-amino-acid chain: E3 ubiquitin-protein ligase MARCHF3 (251 aa).

The segment at 61-121 (QSFNDRPMCR…ELCHFRFSVE (61 aa)) adopts an RING-CH-type zinc-finger fold. The Zn(2+) site is built by cysteine 69, cysteine 72, cysteine 85, cysteine 87, histidine 95, cysteine 98, cysteine 111, and cysteine 114. The next 2 helical transmembrane spans lie at 143–163 (LFGDMVCFLFITPLATISGWL) and 180–200 (AVGLIALTVALFTIYLFWTLV).

The protein resides in the cytoplasmic vesicle membrane. It is found in the early endosome membrane. The catalysed reaction is S-ubiquitinyl-[E2 ubiquitin-conjugating enzyme]-L-cysteine + [acceptor protein]-L-lysine = [E2 ubiquitin-conjugating enzyme]-L-cysteine + N(6)-ubiquitinyl-[acceptor protein]-L-lysine.. Its pathway is protein modification; protein ubiquitination. Functionally, E3 ubiquitin-protein ligase which may be involved in endosomal trafficking. E3 ubiquitin ligases accept ubiquitin from an E2 ubiquitin-conjugating enzyme in the form of a thioester and then directly transfer the ubiquitin to targeted substrates. The sequence is that of E3 ubiquitin-protein ligase MARCHF3 (marchf3) from Xenopus tropicalis (Western clawed frog).